Reading from the N-terminus, the 85-residue chain is Large ribosomal subunit protein bL27 (85 aa).

The segment at 1–20 (MATKKAGGSTRNGRDSEAKR) is disordered.

This sequence belongs to the bacterial ribosomal protein bL27 family.

In Haemophilus influenzae (strain PittEE), this protein is Large ribosomal subunit protein bL27.